The primary structure comprises 414 residues: Tryptophan synthase beta chain (414 aa).

Residues 1-12 show a composition bias toward basic and acidic residues; that stretch reads MVSTISRHDQNK. Residues 1–23 form a disordered region; it reads MVSTISRHDQNKNNDYLNQPSKE. Lys-109 carries the N6-(pyridoxal phosphate)lysine modification.

The protein belongs to the TrpB family. Tetramer of two alpha and two beta chains. The cofactor is pyridoxal 5'-phosphate.

It catalyses the reaction (1S,2R)-1-C-(indol-3-yl)glycerol 3-phosphate + L-serine = D-glyceraldehyde 3-phosphate + L-tryptophan + H2O. Its pathway is amino-acid biosynthesis; L-tryptophan biosynthesis; L-tryptophan from chorismate: step 5/5. Functionally, the beta subunit is responsible for the synthesis of L-tryptophan from indole and L-serine. The chain is Tryptophan synthase beta chain from Prochlorococcus marinus (strain MIT 9515).